The sequence spans 101 residues: MAKQSMKARDVKRVKLAEKFYAKRMELKKIISDANSSDEDRWDAVLKLQSLPRDASPSRQRNRCRQTGRPHGVLRKFGLSRIKVREAAMRGEIPGLKKASW.

The protein belongs to the universal ribosomal protein uS14 family. Part of the 30S ribosomal subunit. Contacts proteins S3 and S10.

In terms of biological role, binds 16S rRNA, required for the assembly of 30S particles and may also be responsible for determining the conformation of the 16S rRNA at the A site. The protein is Small ribosomal subunit protein uS14 of Actinobacillus succinogenes (strain ATCC 55618 / DSM 22257 / CCUG 43843 / 130Z).